The primary structure comprises 205 residues: Listeria nuclear targeted protein A (205 aa).

Residues 1-36 (MKKLVAWFNGLSKMWKVVVIIGAVFVVIIALTTGED) form the signal peptide.

As to quaternary structure, interacts specifically with host BAHD1.

The protein localises to the secreted. It localises to the host nucleus. In terms of biological role, relieves the repression of host cell immune response genes (interferon-stimulated genes) by blocking the recruitment of host BAHD1 to these genes. May modulate interferon-mediated immune response to control bacterial colonization of the host. The protein is Listeria nuclear targeted protein A (lntA) of Listeria monocytogenes serovar 1/2a (strain ATCC BAA-679 / EGD-e).